A 447-amino-acid chain; its full sequence is UPF0210 protein LBUL_0934 (447 aa).

It belongs to the UPF0210 family. In terms of assembly, homodimer.

The sequence is that of UPF0210 protein LBUL_0934 from Lactobacillus delbrueckii subsp. bulgaricus (strain ATCC BAA-365 / Lb-18).